The following is a 593-amino-acid chain: MKGSIPRPFIDDLLTKSDIVDVINTRVKLKKAGRDYQACCPFHHEKTPSFTVSQKKQFYHCFGCGAHGNAISFLMDYDKLEFIEAIEELAAMAGLEIPYEKRVNHSGKPQANYQTKRNLYELMQEIATFYQNQLPLNTQAQEYLQQRGLSPEIIERFQIGFVPNAMDTVLRKFGVNREEQQKLIELGMLSRNDRGNIYDKFRNRIMFPIRDKRGRTVAFGGRVLTDEKPKYLNSPETITYHKGKELYGLYEALQTNDEPKQLLVVEGYMDVVALAQFGVDYAVASLGTSTTSEQIQLILRSTEQVVCCYDGDRAGRDAAWRALENALPYLEDGRQLKFIFLPDGEEPDTYIRQYGKEKFEEYIESAQSLSEFMFAHLSPQVDFSTKEGRGKLVALAAPLIHQIPGEMLRLSLRNMLAQKLGIFDQTQLENLIPKKLEQANTQQKVTHNKIKKTPMRMVISLLMQNPELVKRMSESGVQALRAEAGFEILEKLTALCRQREGITTGQILEYFRNTSYSNPLEILATWDHLLDESDIINAFSQNYRRLNIQAIERDIEMLIAKERTEGLTNEEKTVLVHLLAGKEQQKKQLVNPL.

A CHC2-type zinc finger spans residues 40 to 64 (CPFHHEKTPSFTVSQKKQFYHCFGC). The Toprim domain occupies 260–342 (KQLLVVEGYM…GRQLKFIFLP (83 aa)). Positions 266, 310, and 312 each coordinate Mg(2+).

This sequence belongs to the DnaG primase family. In terms of assembly, monomer. Interacts with DnaB. Zn(2+) serves as cofactor. Mg(2+) is required as a cofactor.

The enzyme catalyses ssDNA + n NTP = ssDNA/pppN(pN)n-1 hybrid + (n-1) diphosphate.. Its function is as follows. RNA polymerase that catalyzes the synthesis of short RNA molecules used as primers for DNA polymerase during DNA replication. The protein is DNA primase of Haemophilus influenzae (strain ATCC 51907 / DSM 11121 / KW20 / Rd).